The primary structure comprises 1704 residues: Phospholipid-transporting ATPase ABCA3 (1704 aa).

N-linked (GlcNAc...) asparagine glycosylation is present at asparagine 14. Residues 22–42 traverse the membrane as a helical segment; the sequence is VLVTVLELFLPLLFSGILIWL. N-linked (GlcNAc...) asparagine glycans are attached at residues asparagine 53, asparagine 124, asparagine 140, and asparagine 228. Transmembrane regions (helical) follow at residues 251-271, 307-327, 344-364, 373-393, and 405-425; these read ISDPFLIAIQYQLPLLLMLSF, AWFLMFLLFSLIVVSFMTLLF, SLVLAFLLCFAISSISFSFMV, MAATVGGFLYFFTYTPYFFVA, and LLSCLLSNVAMAMGAQLIGKF. The 234-residue stretch at 530–763 folds into the ABC transporter 1 domain; the sequence is IKIKHLSKVF…YGAGYHMTLV (234 aa). 566-573 contributes to the ATP binding site; it reads GHNGAGKT. N-linked (GlcNAc...) asparagine glycosylation is found at asparagine 620 and asparagine 945. 6 helical membrane passes run 1100 to 1120, 1144 to 1164, 1183 to 1203, 1213 to 1233, 1245 to 1265, and 1310 to 1330; these read IALNLLIAMAFLASTFSILAV, SALLWDLISFLVPSLLLLVVF, LLLMLYGWAIIPLMYLLSFFF, LTIFNILSGIATFIVVTIMRI, LDHVFLVLPNHCLGMAVSNFY, and MAASGGIYLTLLFLIETNLLW. Asparagine 1350 carries N-linked (GlcNAc...) asparagine glycosylation. Positions 1381 to 1614 constitute an ABC transporter 2 domain; sequence LIINELSKVY…FGSGYSLQAK (234 aa). 1416 to 1423 serves as a coordination point for ATP; sequence GFNGAGKT.

In terms of assembly, homooligomer; disulfide-linked. In terms of processing, N-glycosylated. Localization at intracellular vesicles is accompanied by processing of oligosaccharide from high mannose type to complex type. N-linked glycosylation at Asn-124 and Asn-140 is required for stability and efficient anterograde trafficking and prevents from proteasomal degradation. Post-translationally, proteolytically cleaved by CTSL and to a lower extent by CTSB within multivesicular bodies (MVB) and lamellar bodies (LB) leading to a mature form of 150 kDa. In terms of tissue distribution, highly expressed in lung, moderately expressed in stomach, intestine, and kidney and weakly expressed in thyroid, brain, liver, spleen, heart, testis, and thymus.

It is found in the endosome. It localises to the multivesicular body membrane. The protein localises to the cytoplasmic vesicle membrane. Its subcellular location is the late endosome membrane. The protein resides in the lysosome membrane. The catalysed reaction is ATP + H2O + xenobioticSide 1 = ADP + phosphate + xenobioticSide 2.. It carries out the reaction a 1,2-diacyl-sn-glycero-3-phosphocholine(in) + ATP + H2O = a 1,2-diacyl-sn-glycero-3-phosphocholine(out) + ADP + phosphate + H(+). The enzyme catalyses ATP + H2O + phospholipidSide 1 = ADP + phosphate + phospholipidSide 2.. It catalyses the reaction 1,2-dihexadecanoyl-sn-glycero-3-phosphocholine(in) + ATP + H2O = 1,2-dihexadecanoyl-sn-glycero-3-phosphocholine(out) + ADP + phosphate + H(+). The catalysed reaction is cholesterol(in) + ATP + H2O = cholesterol(out) + ADP + phosphate + H(+). It carries out the reaction a 1,2-diacyl-sn-glycero-3-phospho-(1'-sn-glycerol)(in) + ATP + H2O = a 1,2-diacyl-sn-glycero-3-phospho-(1'-sn-glycerol)(out) + ADP + phosphate + H(+). Functionally, catalyzes the ATP-dependent transport of phospholipids such as phosphatidylcholine and phosphoglycerol from the cytoplasm into the lumen side of lamellar bodies, in turn participates in the lamellar bodies biogenesis and homeostasis of pulmonary surfactant. Transports preferentially phosphatidylcholine containing short acyl chains. In addition plays a role as an efflux transporter of miltefosine across macrophage membranes and free cholesterol (FC) through intralumenal vesicles by removing FC from the cell as a component of surfactant and protects cells from free cholesterol toxicity. The chain is Phospholipid-transporting ATPase ABCA3 from Rattus norvegicus (Rat).